Reading from the N-terminus, the 175-residue chain is Adenine phosphoribosyltransferase (175 aa).

This sequence belongs to the purine/pyrimidine phosphoribosyltransferase family. As to quaternary structure, homodimer.

The protein localises to the cytoplasm. It catalyses the reaction AMP + diphosphate = 5-phospho-alpha-D-ribose 1-diphosphate + adenine. Its pathway is purine metabolism; AMP biosynthesis via salvage pathway; AMP from adenine: step 1/1. Catalyzes a salvage reaction resulting in the formation of AMP, that is energically less costly than de novo synthesis. This chain is Adenine phosphoribosyltransferase, found in Synechococcus sp. (strain JA-3-3Ab) (Cyanobacteria bacterium Yellowstone A-Prime).